The sequence spans 289 residues: ATP synthase gamma chain (289 aa).

The protein belongs to the ATPase gamma chain family. As to quaternary structure, F-type ATPases have 2 components, CF(1) - the catalytic core - and CF(0) - the membrane proton channel. CF(1) has five subunits: alpha(3), beta(3), gamma(1), delta(1), epsilon(1). CF(0) has three main subunits: a, b and c.

It is found in the cell inner membrane. In terms of biological role, produces ATP from ADP in the presence of a proton gradient across the membrane. The gamma chain is believed to be important in regulating ATPase activity and the flow of protons through the CF(0) complex. This is ATP synthase gamma chain from Cereibacter sphaeroides (strain ATCC 17025 / ATH 2.4.3) (Rhodobacter sphaeroides).